Reading from the N-terminus, the 519-residue chain is Lysine histidine transporter-like 8 (519 aa).

Residues 1 to 44 (MDERPETELISIPATPRVSTPEILTPSGQRSPRPATKPSSATWT) are disordered. The Cytoplasmic portion of the chain corresponds to 1-114 (MDERPETELI…NLNAGVGFQA (114 aa)). 2 helical membrane passes run 115 to 135 (LVLP…SLTI) and 136 to 156 (AYCW…AVPG). The Cytoplasmic segment spans residues 157 to 176 (KRYNRYVELAQAAFGERLGV). The chain crosses the membrane as a helical span at residues 177-197 (WLALFPTVYLSAGTATALILI). At 198–217 (GGETMKLFFQIVCGPLCTSN) the chain is on the extracellular side. The helical transmembrane segment at 218–238 (PLTTVEWYLVFTSLCIVLSQL) threads the bilayer. At 239–243 (PNLNS) the chain is on the cytoplasmic side. Residues 244-264 (IAGLSLIGAVTAITYSTMVWV) form a helical membrane-spanning segment. The Extracellular segment spans residues 265-282 (LSVSQPRPATISYEPLSM). The chain crosses the membrane as a helical span at residues 283–303 (PSTSGSLFAVLNALGIIAFAF). Residues 304 to 333 (RGHNLVLEIQSTMPSTFKHPAHVPMWRGAK) lie on the Cytoplasmic side of the membrane. A helical membrane pass occupies residues 334-354 (ISYFLIALCIFPISIGGFWAY). The Extracellular portion of the chain corresponds to 355-377 (GNLMPSGGMLAALYAFHIHDIPR). The helical transmembrane segment at 378 to 398 (GLLATAFLLVVFSCLSSFQIY) threads the bilayer. Residues 399–427 (SMPAFDSFEAGYTSRTNKPCSIWVRSGFR) are Cytoplasmic-facing. Residues 428-448 (VFFGFVSFFIGVALPFLSSLA) traverse the membrane as a helical segment. Residue Gly449 is a topological domain, extracellular. A helical transmembrane segment spans residues 450–470 (LLGGLTLPVTFAYPCFMWVLI). Residues 471-485 (KKPAKYSFNWYFHWG) are Cytoplasmic-facing. A helical transmembrane segment spans residues 486-506 (LGWLGVAFSLAFSIGGIWSMV). At 507–519 (TNGLKLKFFKPPN) the chain is on the extracellular side.

This sequence belongs to the amino acid/polyamine transporter 2 family. Amino acid/auxin permease (AAAP) (TC 2.A.18.2) subfamily.

The protein resides in the cell membrane. Amino acid transporter. This chain is Lysine histidine transporter-like 8 (AATL1), found in Arabidopsis thaliana (Mouse-ear cress).